Here is a 75-residue protein sequence, read N- to C-terminus: uncharacterized protein (75 aa).

The N-terminal stretch at 1–26 is a signal peptide; the sequence is MQFLERHFSVLFPVLFFFSFYPISFA.

It localises to the secreted. This is an uncharacterized protein from Schizosaccharomyces pombe (strain 972 / ATCC 24843) (Fission yeast).